A 416-amino-acid polypeptide reads, in one-letter code: tRNA(Met) cytidine acetate ligase (416 aa).

ATP-binding positions include 7–20, glycine 102, asparagine 166, and arginine 191; that span reads VAEY…HLYL.

This sequence belongs to the TmcAL family.

Its subcellular location is the cytoplasm. It catalyses the reaction cytidine(34) in elongator tRNA(Met) + acetate + ATP = N(4)-acetylcytidine(34) in elongator tRNA(Met) + AMP + diphosphate. In terms of biological role, catalyzes the formation of N(4)-acetylcytidine (ac(4)C) at the wobble position of elongator tRNA(Met), using acetate and ATP as substrates. First activates an acetate ion to form acetyladenylate (Ac-AMP) and then transfers the acetyl group to tRNA to form ac(4)C34. The polypeptide is tRNA(Met) cytidine acetate ligase (Syntrophomonas wolfei subsp. wolfei (strain DSM 2245B / Goettingen)).